A 169-amino-acid chain; its full sequence is Putative pre-16S rRNA nuclease (169 aa).

The span at 1-19 (MTDSDHRLPDRPGEGDPGR) shows a compositional bias: basic and acidic residues. The tract at residues 1-24 (MTDSDHRLPDRPGEGDPGRGRRIG) is disordered.

This sequence belongs to the YqgF nuclease family.

Its subcellular location is the cytoplasm. Could be a nuclease involved in processing of the 5'-end of pre-16S rRNA. The polypeptide is Putative pre-16S rRNA nuclease (Mycobacterium sp. (strain KMS)).